The chain runs to 1026 residues: MGSVLYSLSESANLYPASELFLRHRLQIVEELWESVLRQECGQNMVDLLRQLRDLCSPEGQATKDQAVSAVKLIEQLNINEAIRAARAFALYFQLINIIEQEYEQRQQLTRYSDLEAETAPLNGSENITSSSNHNEDDVIFNRGLGTDFLGKNWTNRGQGKQKGTFAALFPLLSKLNVPPQQIQRLISQLDVRLVFTAHPTEIVRHTIRDKQRQVVDLLQQLDEVENRAKDGGGYPWEAGEIREKLLEEIRLWWRTDELHQFKPTVLDEVDYALHYFQEVLFDGIPQLYKRFKYALNQTFSWLEPPSKDFCSFGSWVGSDRDGNPSVTPEITWQTACYQRKMVLERYIKSVTQLIELLSISMHWSDVLPDLLESLELDQSQLSEVYDALALRYRQEPYRLKLAYVLKRLENTRDRNLALYKGETPTNEDSPMYRSGSEFLAELRLIQHNLTETGLSCRELDNLICQVEIFDFNLTKLDIRQESTRHSDALNEILDYLQLLPQPYNDLSEEQRVAWLTTELQTRRPLISSELPFSDKTNDVIKTFRVVRSLQQEFGINICQTYIISMCRQVSDVLEVLLLAKEARLFDPAIAVGTIQVVPLFETVEDLQRSRSVMRQLFELPLYRALLAGGYKNTEVKVPNTELTPQSPAPSPQSVLTPDLQEVMLGYSDSNKDSGFLSSNWEIHKAQKSLQQIAEEYGVNLRIFHGRGGSVGRGGGPAHEAILAQPGHSINGRIKITEQGEVLASKYSLLDLALYNLETITTAVIQASLLRTGFDDIEPWNEIMEELAARSRQHYRGLIYEQPDFIDFFHQVTPIEEISQLQISSRPARRPSGKKDLSSLRAIPWVFSWTQTRFLLPSWYGVGTALQEFFNEEPEEHLKLMRYFYVKWPFFKMVISKVEMTLAKVDMQMAGHYVQELSDPEDKPRFEKVFEQIANEYYLTRDLVLKITDHGRLLDGDPVLQRSVQLRNGTIVPLGFIQVSLLKRLRQSKNNTATSGVIHSRYSKGELLRGALLTINGIAAGMRNTG.

Residues His-199 and Lys-672 contribute to the active site.

This sequence belongs to the PEPCase type 1 family. Requires Mg(2+) as cofactor.

It carries out the reaction oxaloacetate + phosphate = phosphoenolpyruvate + hydrogencarbonate. Forms oxaloacetate, a four-carbon dicarboxylic acid source for the tricarboxylic acid cycle. This is Phosphoenolpyruvate carboxylase (ppc) from Nostoc sp. (strain PCC 7120 / SAG 25.82 / UTEX 2576).